A 176-amino-acid chain; its full sequence is Membrane glycoprotein UL144 (176 aa).

The signal sequence occupies residues 1 to 20 (MKPLIMLICFAVILLQLGVT). TNFR-Cys repeat units lie at residues 22–56 (VCQH…SVTC) and 58–95 (PCPN…NTVC). Disulfide bonds link Cys-23–Cys-34, Cys-35–Cys-48, Cys-38–Cys-56, Cys-59–Cys-71, Cys-74–Cys-87, and Cys-77–Cys-95. A helical membrane pass occupies residues 134–154 (LAWLSLFIFLVGIILLILYLI).

As to quaternary structure, interacts with host TRIM23; this interaction causes auto-ubiquitination of TRAF6, leading to NF-kappaB activation.

The protein localises to the membrane. Its function is as follows. Activates NF-kappaB in a tumor necrosis factor receptor (TNFR)-associated factor 6 (TRAF6)-dependent manner, causing the up-regulation of the chemokine CCL22. The polypeptide is Membrane glycoprotein UL144 (UL144) (Homo sapiens (Human)).